A 230-amino-acid polypeptide reads, in one-letter code: RING finger protein 141 (230 aa).

A lipid anchor (N-myristoyl glycine) is attached at Gly2. The RING-type zinc finger occupies 155–192; sequence CCICMDGRADLILPCAHSFCQKCIDKWSDRHRNCPICR.

Its subcellular location is the membrane. Its function is as follows. May be involved in spermatogenesis. The protein is RING finger protein 141 (RNF141) of Bos taurus (Bovine).